The primary structure comprises 441 residues: Zinc finger and BTB domain-containing protein 8A (441 aa).

The BTB domain occupies 24-92 (CDCSILVEGK…VYSGKLSLTG (69 aa)). The disordered stretch occupies residues 135 to 248 (LSDKDTGSNG…HVSQSEEQVQ (114 aa)). Serine 161 and serine 167 each carry phosphoserine. Residues lysine 178, lysine 182, and lysine 199 each participate in a glycyl lysine isopeptide (Lys-Gly) (interchain with G-Cter in SUMO2) cross-link. 2 stretches are compositionally biased toward basic and acidic residues: residues 198–208 (AKHEQRKDPIK) and 227–242 (GKGD…HVSQ). C2H2-type zinc fingers lie at residues 282–304 (FKCP…LRCH) and 310–333 (YPCQ…RTIH). Residue lysine 437 forms a Glycyl lysine isopeptide (Lys-Gly) (interchain with G-Cter in SUMO2) linkage.

Its subcellular location is the nucleus. In terms of biological role, may be involved in transcriptional regulation. This Rattus norvegicus (Rat) protein is Zinc finger and BTB domain-containing protein 8A (Zbtb8a).